The chain runs to 239 residues: EF-hand domain-containing protein D2 (239 aa).

The disordered stretch occupies residues 1 to 51 (MATDELASKLSRRLQMEDEGGEATEQPGLNGAAAAAAEAPDETAQALGSAD). Ala-2 is modified (N-acetylalanine). At Ser-11 the chain carries Phosphoserine. A compositionally biased stretch (low complexity) spans 32–46 (AAAAAAEAPDETAQA). Phosphoserine occurs at positions 73 and 75. Tyr-82 bears the Phosphotyrosine mark. EF-hand domains follow at residues 91-126 (KQIK…LGAP) and 127-162 (QTHL…AAAG). Ca(2+) is bound by residues Asp-104, Asp-108, Glu-115, Asp-140, Asp-142, Asp-144, Lys-146, and Glu-151. Position 232 is an N6-acetyllysine (Lys-232).

In terms of assembly, interacts with CASP9; with inactive form.

Its subcellular location is the membrane raft. Its function is as follows. May regulate B-cell receptor (BCR)-induced immature and primary B-cell apoptosis. Plays a role as negative regulator of the canonical NF-kappa-B-activating branch. Controls spontaneous apoptosis through the regulation of BCL2L1 abundance. The sequence is that of EF-hand domain-containing protein D2 (Efhd2) from Rattus norvegicus (Rat).